Reading from the N-terminus, the 437-residue chain is tRNA-queuosine alpha-mannosyltransferase (437 aa).

This sequence belongs to the glycosyltransferase group 1 family. Glycosyltransferase 4 subfamily.

It is found in the cytoplasm. Its subcellular location is the nucleus. It carries out the reaction queuosine(34) in tRNA(Asp) + GDP-alpha-D-mannose = O-4''-alpha-D-mannosylqueuosine(34) in tRNA(Asp) + GDP + H(+). Functionally, glycosyltransferase that specifically catalyzes mannosylation of cytoplasmic tRNA(Asp) modified with queuosine at position 34 (queuosine(34)). Mannosylates the cyclopentene moiety of queuosine(34) in tRNA(Asp) to form mannosyl-queuosine(34). Mannosylation of queuosine(34) in tRNA(Asp) is required to slow-down elongation at cognate codons, GAC and GAU, thereby regulating protein translation. This chain is tRNA-queuosine alpha-mannosyltransferase (gtdc1), found in Xenopus laevis (African clawed frog).